The following is an 864-amino-acid chain: Structure-specific endonuclease subunit SLX4 (864 aa).

Disordered stretches follow at residues 1 to 21, 49 to 69, 91 to 113, 161 to 190, 289 to 318, 346 to 385, 413 to 433, and 625 to 767; these read MTTQSSSDGRMFTSSIIPVIP, LSTSTSRGPTRSDTVGDKTQG, TGTGGKAATGKRLKRRTESPGNA, ANQTVSRQPETKISAPKECNDTTQPAGNDH, LSDDRQSSITEDSESATSKPRRVKAKNRPK, TLLSDEPGKEKSAAKRTSGARCAKPGRKKSTTTEKKNEPP, ANGHSEDQHEQNEGTSHISNS, and KAPN…VTSS. Residues 295–306 show a composition bias toward polar residues; it reads SSITEDSESATS. The span at 307 to 318 shows a compositional bias: basic residues; the sequence is KPRRVKAKNRPK. The span at 656–668 shows a compositional bias: polar residues; sequence QPNSISQKATTQV. The span at 685–695 shows a compositional bias: low complexity; it reads VSSRRSTSTSK. Polar residues predominate over residues 743–767; that stretch reads PESFNLPTTPLTIRSGKVPSTVTSS.

Belongs to the SLX4 family. In terms of assembly, forms a heterodimer with SLX1. Phosphorylated in response to DNA damage.

It is found in the nucleus. In terms of biological role, regulatory subunit of the SLX1-SLX4 structure-specific endonuclease that resolves DNA secondary structures generated during DNA repair and recombination. Has endonuclease activity towards branched DNA substrates, introducing single-strand cuts in duplex DNA close to junctions with ss-DNA. This chain is Structure-specific endonuclease subunit SLX4, found in Paracoccidioides lutzii (strain ATCC MYA-826 / Pb01) (Paracoccidioides brasiliensis).